The primary structure comprises 338 residues: Methionine import ATP-binding protein MetN 2 (338 aa).

The 241-residue stretch at 2–242 (IEIEKVCVDF…PQHAFTQQLV (241 aa)) folds into the ABC transporter domain. ATP is bound at residue 39–46 (GTSGAGKS).

It belongs to the ABC transporter superfamily. Methionine importer (TC 3.A.1.24) family. In terms of assembly, the complex is composed of two ATP-binding proteins (MetN), two transmembrane proteins (MetI) and a solute-binding protein (MetQ).

The protein localises to the cell inner membrane. The enzyme catalyses L-methionine(out) + ATP + H2O = L-methionine(in) + ADP + phosphate + H(+). The catalysed reaction is D-methionine(out) + ATP + H2O = D-methionine(in) + ADP + phosphate + H(+). In terms of biological role, part of the ABC transporter complex MetNIQ involved in methionine import. Responsible for energy coupling to the transport system. This Salmonella typhi protein is Methionine import ATP-binding protein MetN 2.